The following is a 623-amino-acid chain: Replication protein A 70 kDa DNA-binding subunit (623 aa).

An N-acetylmethionine modification is found at methionine 1. Residues lysine 22 and lysine 88 each participate in a glycyl lysine isopeptide (Lys-Gly) (interchain with G-Cter in ubiquitin) cross-link. Residues 116-163 (VPYNEGYGQQQQQQQQQQQQAVPSPASAATPPASKPQPQNGSLGMGST) form a disordered region. Residues 124-154 (QQQQQQQQQQQQAVPSPASAATPPASKPQPQ) show a composition bias toward low complexity. Residues lysine 172 and lysine 176 each carry the N6-acetyllysine; alternate modification. Residues lysine 172 and lysine 176 each participate in a glycyl lysine isopeptide (Lys-Gly) (interchain with G-Cter in ubiquitin); alternate cross-link. Threonine 189 is modified (phosphothreonine). A Glycyl lysine isopeptide (Lys-Gly) (interchain with G-Cter in ubiquitin) cross-link involves residue lysine 192. Position 200 is a phosphothreonine (threonine 200). The OB DNA-binding region spans 206-290 (WTICARVTNK…VKNDYEMTFN (85 aa)). Glycyl lysine isopeptide (Lys-Gly) (interchain with G-Cter in ubiquitin) cross-links involve residues lysine 229 and lysine 253. Residue lysine 268 is modified to N6-acetyllysine; alternate. Lysine 268 participates in a covalent cross-link: Glycyl lysine isopeptide (Lys-Gly) (interchain with G-Cter in ubiquitin); alternate. Glycyl lysine isopeptide (Lys-Gly) (interchain with G-Cter in ubiquitin) cross-links involve residues lysine 276 and lysine 340. A Phosphoserine modification is found at serine 393. A Glycyl lysine isopeptide (Lys-Gly) (interchain with G-Cter in ubiquitin) cross-link involves residue lysine 419. Lysine 458 participates in a covalent cross-link: Glycyl lysine isopeptide (Lys-Gly) (interchain with G-Cter in SUMO). Residue lysine 467 forms a Glycyl lysine isopeptide (Lys-Gly) (interchain with G-Cter in ubiquitin) linkage. The C4-type zinc finger occupies 490 to 512 (CPTQDCNKKVIDQQNGLYRCEKC). Residue lysine 562 forms a Glycyl lysine isopeptide (Lys-Gly) (interchain with G-Cter in ubiquitin) linkage. Residue lysine 586 forms a Glycyl lysine isopeptide (Lys-Gly) (interchain with G-Cter in SUMO) linkage.

It belongs to the replication factor A protein 1 family. As to quaternary structure, component of the canonical replication protein A complex (RPA), a heterotrimer composed of RPA1, RPA2 and RPA3. The DNA-binding activity may reside exclusively on the RPA1 subunit. Interacts with PRPF19; the PRP19-CDC5L complex is recruited to the sites of DNA repair where it ubiquitinates the replication protein A complex (RPA). Interacts with RIPK1. Interacts with the polymerase alpha subunit POLA1/p180; this interaction stabilizes the replicative complex and reduces the misincorporation rate of DNA polymerase alpha by acting as a fidelity clamp. Interacts with RAD51 and SENP6 to regulate DNA repair. Interacts with HELB; this interaction promotes HELB recruitment to chromatin following DNA damage. Interacts with PRIMPOL; leading to recruit PRIMPOL on chromatin and stimulate its DNA primase activity. Interacts with XPA; the interaction is direct and associates XPA with the RPA complex. Interacts with ETAA1; the interaction is direct and promotes ETAA1 recruitment at stalled replication forks. Interacts with RPA1; this interaction associates HROB with the RPA complex. Interacts (when poly-ADP-ribosylated) with HTATSF1. In terms of processing, DNA damage-induced 'Lys-63'-linked polyubiquitination by PRPF19 mediates ATRIP recruitment to the RPA complex at sites of DNA damage and activation of ATR. Ubiquitinated by RFWD3 at stalled replication forks in response to DNA damage: ubiquitination by RFWD3 does not lead to degradation by the proteasome and promotes removal of the RPA complex from stalled replication forks, promoting homologous recombination. Sumoylated on lysine residues Lys-458 and Lys-586, with Lys-458 being the major site. Sumoylation promotes recruitment of RAD51 to the DNA damage foci to initiate DNA repair through homologous recombination. Desumoylated by SENP6. Post-translationally, poly-ADP-ribosylated by PARP1; promoting recruitment of HTATSF1.

The protein resides in the nucleus. Its subcellular location is the PML body. Functionally, as part of the heterotrimeric replication protein A complex (RPA/RP-A), binds and stabilizes single-stranded DNA intermediates, that form during DNA replication or upon DNA stress. It prevents their reannealing and in parallel, recruits and activates different proteins and complexes involved in DNA metabolism. Thereby, it plays an essential role both in DNA replication and the cellular response to DNA damage. In the cellular response to DNA damage, the RPA complex controls DNA repair and DNA damage checkpoint activation. Through recruitment of ATRIP activates the ATR kinase a master regulator of the DNA damage response. It is required for the recruitment of the DNA double-strand break repair factors RAD51 and RAD52 to chromatin in response to DNA damage. Also recruits to sites of DNA damage proteins like XPA and XPG that are involved in nucleotide excision repair and is required for this mechanism of DNA repair. Also plays a role in base excision repair (BER) probably through interaction with UNG. Also recruits SMARCAL1/HARP, which is involved in replication fork restart, to sites of DNA damage. May also play a role in telomere maintenance. The protein is Replication protein A 70 kDa DNA-binding subunit (Rpa1) of Mus musculus (Mouse).